The following is a 220-amino-acid chain: UPF0758 protein ASA_4229 (220 aa).

The 126-residue stretch at 95-220 (EQLQRGDALT…TVSFAERGWL (126 aa)) folds into the MPN domain. Residues His-169, His-171, and Asp-182 each coordinate Zn(2+). The JAMM motif signature appears at 169-182 (HNHPSGVAEPSRAD).

It belongs to the UPF0758 family.

The polypeptide is UPF0758 protein ASA_4229 (Aeromonas salmonicida (strain A449)).